The primary structure comprises 328 residues: MEWDNGTGQALGLPPTTCVYRENFKQLLLPPVYSAVLAAGLPLNICVITQICTSRRALTRTAVYTLNLALADLLYACSLPLLIYNYAQGDHWPFGDFACRLVRFLFYANLHGSILFLTCISFQRYLGICHPLAPWHKRGGRRAAWLVCVAVWLAVTTQCLPTAIFAATGIQRNRTVCYDLSPPALATHYMPYGMALTVIGFLLPFAALLACYCLLACRLCRQDGPAEPVAQERRGKAARMAVVVAAAFAISFLPFHITKTAYLAVRSTPGVPCTVLEAFAAAYKGTRPFASANSVLDPILFYFTQKKFRRRPHELLQKLTAKWQRQGR.

At 1-27 the chain is on the extracellular side; sequence MEWDNGTGQALGLPPTTCVYRENFKQL. A glycan (N-linked (GlcNAc...) asparagine) is linked at Asn5. Residues 28–48 traverse the membrane as a helical segment; sequence LLPPVYSAVLAAGLPLNICVI. Over 49–62 the chain is Cytoplasmic; the sequence is TQICTSRRALTRTA. The helical transmembrane segment at 63–83 threads the bilayer; it reads VYTLNLALADLLYACSLPLLI. The Extracellular segment spans residues 84–101; it reads YNYAQGDHWPFGDFACRL. Cysteines 99 and 177 form a disulfide. The chain crosses the membrane as a helical span at residues 102-122; the sequence is VRFLFYANLHGSILFLTCISF. Topologically, residues 123-144 are cytoplasmic; that stretch reads QRYLGICHPLAPWHKRGGRRAA. Residues 145 to 165 form a helical membrane-spanning segment; it reads WLVCVAVWLAVTTQCLPTAIF. Over 166–194 the chain is Extracellular; sequence AATGIQRNRTVCYDLSPPALATHYMPYGM. Residues 195–215 traverse the membrane as a helical segment; it reads ALTVIGFLLPFAALLACYCLL. Residues 216-236 are Cytoplasmic-facing; that stretch reads ACRLCRQDGPAEPVAQERRGK. The helical transmembrane segment at 237-257 threads the bilayer; the sequence is AARMAVVVAAAFAISFLPFHI. Topologically, residues 258–280 are extracellular; that stretch reads TKTAYLAVRSTPGVPCTVLEAFA. A helical transmembrane segment spans residues 281-303; that stretch reads AAYKGTRPFASANSVLDPILFYF. Over 304–328 the chain is Cytoplasmic; that stretch reads TQKKFRRRPHELLQKLTAKWQRQGR.

This sequence belongs to the G-protein coupled receptor 1 family.

Its subcellular location is the cell membrane. Receptor for extracellular UDP &gt; UTP &gt; ATP. The activity of this receptor is mediated by G proteins which activate a phosphatidylinositol-calcium second messenger system. In Homo sapiens (Human), this protein is P2Y purinoceptor 6 (P2RY6).